Here is a 768-residue protein sequence, read N- to C-terminus: Translation initiation factor IF-2, chloroplastic (768 aa).

Disordered regions lie at residues Met1–Asn20, Lys54–Ser77, and Lys155–Ser176. A compositionally biased stretch (basic and acidic residues) spans Lys54–Leu65. Over residues Thr160–Ser176 the composition is skewed to polar residues. The tr-type G domain occupies Lys261–Lys434. Residues Gly270 to Thr277, Asp320 to His324, and Ser374 to Asp377 each bind GTP.

This sequence belongs to the TRAFAC class translation factor GTPase superfamily. Classic translation factor GTPase family. IF-2 subfamily.

The protein resides in the plastid. The protein localises to the chloroplast. One of the essential components for the initiation of protein synthesis. Protects formylmethionyl-tRNA from spontaneous hydrolysis and promotes its binding to the 30S ribosomal subunits. Also involved in the hydrolysis of GTP during the formation of the 70S ribosomal complex. The polypeptide is Translation initiation factor IF-2, chloroplastic (infB) (Pyropia yezoensis (Susabi-nori)).